Consider the following 269-residue polypeptide: Adenosylcobinamide-GDP ribazoletransferase (269 aa).

5 consecutive transmembrane segments (helical) span residues 8–28 (QFNL…PTAI), 41–61 (YFPL…CFML), 70–90 (VCLL…DGLA), 114–136 (IGTY…LSSL), and 196–216 (VPAV…SACV).

The protein belongs to the CobS family. The cofactor is Mg(2+).

Its subcellular location is the cell inner membrane. It catalyses the reaction alpha-ribazole + adenosylcob(III)inamide-GDP = adenosylcob(III)alamin + GMP + H(+). The catalysed reaction is alpha-ribazole 5'-phosphate + adenosylcob(III)inamide-GDP = adenosylcob(III)alamin 5'-phosphate + GMP + H(+). It participates in cofactor biosynthesis; adenosylcobalamin biosynthesis; adenosylcobalamin from cob(II)yrinate a,c-diamide: step 7/7. Its function is as follows. Joins adenosylcobinamide-GDP and alpha-ribazole to generate adenosylcobalamin (Ado-cobalamin). Also synthesizes adenosylcobalamin 5'-phosphate from adenosylcobinamide-GDP and alpha-ribazole 5'-phosphate. This Pseudoalteromonas atlantica (strain T6c / ATCC BAA-1087) protein is Adenosylcobinamide-GDP ribazoletransferase.